We begin with the raw amino-acid sequence, 223 residues long: Deoxyribose-phosphate aldolase (223 aa).

Catalysis depends on aspartate 89, which acts as the Proton donor/acceptor. Catalysis depends on lysine 152, which acts as the Schiff-base intermediate with acetaldehyde. Lysine 181 acts as the Proton donor/acceptor in catalysis.

It belongs to the DeoC/FbaB aldolase family. DeoC type 1 subfamily.

The protein resides in the cytoplasm. The enzyme catalyses 2-deoxy-D-ribose 5-phosphate = D-glyceraldehyde 3-phosphate + acetaldehyde. The protein operates within carbohydrate degradation; 2-deoxy-D-ribose 1-phosphate degradation; D-glyceraldehyde 3-phosphate and acetaldehyde from 2-deoxy-alpha-D-ribose 1-phosphate: step 2/2. Functionally, catalyzes a reversible aldol reaction between acetaldehyde and D-glyceraldehyde 3-phosphate to generate 2-deoxy-D-ribose 5-phosphate. The protein is Deoxyribose-phosphate aldolase of Bacillus subtilis (strain 168).